A 72-amino-acid chain; its full sequence is Large ribosomal subunit protein bL31 (72 aa).

Positions 16, 18, 37, and 40 each coordinate Zn(2+).

It belongs to the bacterial ribosomal protein bL31 family. Type A subfamily. Part of the 50S ribosomal subunit. Zn(2+) serves as cofactor.

Its function is as follows. Binds the 23S rRNA. This chain is Large ribosomal subunit protein bL31, found in Hahella chejuensis (strain KCTC 2396).